Reading from the N-terminus, the 231-residue chain is Small ribosomal subunit protein uS3 (231 aa).

The region spanning 39 to 107 (IRKFIKEKLF…QVSVNIVEIK (69 aa)) is the KH type-2 domain.

The protein belongs to the universal ribosomal protein uS3 family. As to quaternary structure, part of the 30S ribosomal subunit. Forms a tight complex with proteins S10 and S14.

Functionally, binds the lower part of the 30S subunit head. Binds mRNA in the 70S ribosome, positioning it for translation. The chain is Small ribosomal subunit protein uS3 from Pelotomaculum thermopropionicum (strain DSM 13744 / JCM 10971 / SI).